The sequence spans 102 residues: Large ribosomal subunit protein bL21 (102 aa).

Belongs to the bacterial ribosomal protein bL21 family. As to quaternary structure, part of the 50S ribosomal subunit. Contacts protein L20.

Functionally, this protein binds to 23S rRNA in the presence of protein L20. This chain is Large ribosomal subunit protein bL21, found in Oceanobacillus iheyensis (strain DSM 14371 / CIP 107618 / JCM 11309 / KCTC 3954 / HTE831).